Here is a 389-residue protein sequence, read N- to C-terminus: Probable DNA double-strand break repair nuclease NurA (389 aa).

Mn(2+)-binding residues include aspartate 74 and aspartate 151.

The protein belongs to the NurA family. The cofactor is Mn(2+).

Its function is as follows. Involved in DNA double-strand break (DSB) repair. Probably acts with HerA to stimulate resection of the 5' strand and produce the long 3' single-strand that is required for RadA loading. The chain is Probable DNA double-strand break repair nuclease NurA from Methanocaldococcus jannaschii (strain ATCC 43067 / DSM 2661 / JAL-1 / JCM 10045 / NBRC 100440) (Methanococcus jannaschii).